Reading from the N-terminus, the 529-residue chain is Cytochrome P450 monooxygenase fsoB (529 aa).

The chain crosses the membrane as a helical span at residues 4 to 24 (WLLSLLIAGVVFAIFQLRTVG). Cys436 lines the heme pocket.

The protein belongs to the cytochrome P450 family. It depends on heme as a cofactor.

It is found in the membrane. Its function is as follows. Cytochrome P450 monooxygenase; part of the gene cluster that mediates the biosynthesis of the enfumafungin-type antibiotic fuscoatroside. Four enzymes are sufficient to produce fuscoatroside: the terpene cyclase-glycosyl transferase fusion protein fsoAthe cytochrome P450 monoxygenases fsoD and fsoE, and the acetyltransferase fsoF; the cytochrome P450 monooxygenase fsoB and the glucose oxidase-like protein fsoC do not seem to play a role in biosynthesis of fuscoatroside. This is Cytochrome P450 monooxygenase fsoB from Humicola fuscoatra.